A 515-amino-acid polypeptide reads, in one-letter code: MTTPYKHEPFTNFQDQNNVEAFKKALATVSEYLGKDYPLVINGERVETEAKIVSINPADKEEVVGRVSKASQEHAEQAIQAAAKAFEEWRYTSPEERAAVLFRAAAKVRRRKHEFSALLVKEAGKPWNEADADTAEAIDFMEYYARQMIELAKGKPVNSREGEKNQYVYTPTGVTVVIPPWNFLFAIMAGTTVAPIVTGNTVVLKPASATPVIAAKFVEVLEESGLPKGVVNFVPGSGAEVGDYLVDHPKTSLITFTGSREVGTRIFERAAKVQPGQQHLKRVIAEMGGKDTVVVDEDADIELAAQSIFTSAFGFAGQKCSAGSRAVVHEKVYDQVLERVIEITESKVTAKPDSADVYMGPVIDQGSYDKIMSYIEIGKQEGRLVSGGTGDDSKGYFIKPTIFADLDPKARLMQEEIFGPVVAFCKVSDFDEALEVANNTEYGLTGAVITNNRKHIERAKQEFHVGNLYFNRNCTGAIVGYHPFGGFKMSGTDSKAGGPDYLALHMQAKTISEMF.

Active-site residues include Glu286 and Cys320.

It belongs to the aldehyde dehydrogenase family. RocA subfamily.

The catalysed reaction is L-glutamate 5-semialdehyde + NAD(+) + H2O = L-glutamate + NADH + 2 H(+). Its pathway is amino-acid degradation; L-proline degradation into L-glutamate; L-glutamate from L-proline: step 2/2. In terms of biological role, important for the use of proline as a sole carbon and energy source or a sole nitrogen source. The protein is 1-pyrroline-5-carboxylate dehydrogenase 2 of Bacillus subtilis (strain 168).